The following is an 805-amino-acid chain: Mitochondrial inner membrane m-AAA protease component AFG3L2 (805 aa).

Residues 1–39 constitute a mitochondrion transit peptide; sequence MAHRCLLLWGRGACRPRGMPPMLLPGGRTGSTERLYLRM. A propeptide spans 40-67 (removed in mature form); that stretch reads LYRYATTQAKTSRNSLLTDVIAAYQRLC. The disordered stretch occupies residues 74-127; sequence FEKYFPNGKNGKKTSEPKEVMGEKKEPKPAAAPRPSGGGVGGGGKRGGKKDDSH. Positions 86–101 are enriched in basic and acidic residues; it reads KTSEPKEVMGEKKEPK. Positions 109–118 are enriched in gly residues; that stretch reads SGGGVGGGGK. K118 carries the post-translational modification N6-succinyllysine. The next 2 membrane-spanning stretches (helical) occupy residues 144–164 and 252–272; these read FKMYFLWTALFWGGFLFYFLF and GSFLLSMLPTVLIIAFLLYTI. Residues V311, A312, T353, G354, K355, T356, L357, and H491 each coordinate ATP. H575 is a binding site for Zn(2+). Residue E576 is part of the active site. Zn(2+) contacts are provided by H579 and D650. The segment at 760–805 is disordered; the sequence is FVEGTGSLDEDTSLPEGLKDWNREREGSEEPSGEKVTSPVQGAGPA. Residues 776-787 show a composition bias toward basic and acidic residues; sequence GLKDWNREREGS.

It in the N-terminal section; belongs to the AAA ATPase family. In the C-terminal section; belongs to the peptidase M41 family. In terms of assembly, homohexamer. Forms heterohexamers with SPG7. The m-AAA protease is either composed of homohexamers of AFG3L2 or heterohexamers of AFG3L2 and SPG7. Interacts with MAIP1. Interacts with DNAJC19. Interacts with PHB2. The cofactor is Zn(2+). In terms of processing, upon import into the mitochondrion, the N-terminal transit peptide is cleaved to generate an intermediate form which undergoes autocatalytic proteolytic processing to generate the proteolytically active mature form.

Its subcellular location is the mitochondrion inner membrane. The catalysed reaction is ATP + H2O = ADP + phosphate + H(+). Catalytic component of the m-AAA protease, a protease that plays a key role in proteostasis of inner mitochondrial membrane proteins, and which is essential for axonal and neuron development. AFG3L2 possesses both ATPase and protease activities: the ATPase activity is required to unfold substrates, threading them into the internal proteolytic cavity for hydrolysis into small peptide fragments. The m-AAA protease carries out protein quality control in the inner membrane of the mitochondria by mediating degradation of mistranslated or misfolded polypeptides. The m-AAA protease complex also promotes the processing and maturation of mitochondrial proteins, such as MRPL32/bL32m, PINK1 and SP7. Mediates protein maturation of the mitochondrial ribosomal subunit MRPL32/bL32m by catalyzing the cleavage of the presequence of MRPL32/bL32m prior to assembly into the mitochondrial ribosome. Required for SPG7 maturation into its active mature form after SPG7 cleavage by mitochondrial-processing peptidase (MPP). Required for the maturation of PINK1 into its 52kDa mature form after its cleavage by mitochondrial-processing peptidase (MPP). Acts as a regulator of calcium in neurons by mediating degradation of SMDT1/EMRE before its assembly with the uniporter complex, limiting the availability of SMDT1/EMRE for MCU assembly and promoting efficient assembly of gatekeeper subunits with MCU. Promotes the proteolytic degradation of GHITM upon hyperpolarization of mitochondria: progressive GHITM degradation leads to respiratory complex I degradation and broad reshaping of the mitochondrial proteome by AFG3L2. Also acts as a regulator of mitochondrial glutathione homeostasis by mediating cleavage and degradation of SLC25A39. SLC25A39 cleavage is prevented when SLC25A39 binds iron-sulfur. Involved in the regulation of OMA1-dependent processing of OPA1. May act by mediating processing of OMA1 precursor, participating in OMA1 maturation. The sequence is that of Mitochondrial inner membrane m-AAA protease component AFG3L2 (AFG3L2) from Bos taurus (Bovine).